Reading from the N-terminus, the 659-residue chain is Alpha-amylase (659 aa).

An N-terminal signal peptide occupies residues 1 to 27 (MFAKRFKTSLLPLFAGFLLLFHLVLAG). Positions 28 to 41 (PAAASAETANKSNE) are excised as a propeptide. Ca(2+) is bound by residues N142, T178, D187, G210, and D212. Residue D217 is the Nucleophile of the active site. Position 221 (H221) interacts with Ca(2+). The Proton donor role is filled by E249.

The protein belongs to the glycosyl hydrolase 13 family. Monomer. Requires Ca(2+) as cofactor.

Its subcellular location is the secreted. The catalysed reaction is Endohydrolysis of (1-&gt;4)-alpha-D-glucosidic linkages in polysaccharides containing three or more (1-&gt;4)-alpha-linked D-glucose units.. The chain is Alpha-amylase (amyE) from Bacillus subtilis (strain 168).